A 191-amino-acid chain; its full sequence is Pyridoxal 5'-phosphate synthase subunit PdxT (191 aa).

48-50 (GES) is a binding site for L-glutamine. Cys-81 serves as the catalytic Nucleophile. Residues Arg-109 and 136 to 137 (IR) each bind L-glutamine. Residues His-172 and Glu-174 each act as charge relay system in the active site.

The protein belongs to the glutaminase PdxT/SNO family. In terms of assembly, in the presence of PdxS, forms a dodecamer of heterodimers. Only shows activity in the heterodimer.

The enzyme catalyses aldehydo-D-ribose 5-phosphate + D-glyceraldehyde 3-phosphate + L-glutamine = pyridoxal 5'-phosphate + L-glutamate + phosphate + 3 H2O + H(+). It catalyses the reaction L-glutamine + H2O = L-glutamate + NH4(+). Its pathway is cofactor biosynthesis; pyridoxal 5'-phosphate biosynthesis. Catalyzes the hydrolysis of glutamine to glutamate and ammonia as part of the biosynthesis of pyridoxal 5'-phosphate. The resulting ammonia molecule is channeled to the active site of PdxS. The polypeptide is Pyridoxal 5'-phosphate synthase subunit PdxT (Thermus thermophilus (strain ATCC BAA-163 / DSM 7039 / HB27)).